A 574-amino-acid polypeptide reads, in one-letter code: Avenacosidase 1 (574 aa).

Residues 1–55 (MALLCSALSNSTHPSFRSHIGANSENLWHLSADPAQKSKRRCNLTLSSRAARISS) constitute a chloroplast transit peptide. Residues glutamine 88, histidine 192, and 237–238 (NE) contribute to the a beta-D-glucoside site. The active-site Proton donor is the glutamate 238. Cysteine 258 and cysteine 264 form a disulfide bridge. Residues tyrosine 381, glutamate 454, tryptophan 505, 512-513 (EW), and phenylalanine 521 contribute to the a beta-D-glucoside site. The active-site Nucleophile is the glutamate 454.

This sequence belongs to the glycosyl hydrolase 1 family. As to quaternary structure, homo- and heteromultimer with P60B in a 1:1 stoichiometry. Aggregates to form the fibrillar stromacentre. As to expression, expressed in caryopses, coleoptiles, primary leaves, and etiolated and green seedlings, but not in roots.

The protein localises to the plastid. The protein resides in the chloroplast stroma. It catalyses the reaction avenacoside B + H2O = 26-desgluco-avenacoside B + D-glucose. Inhibited by N-(3-Dimethylaminopropyl)-N'-ethylcarbodiimide hydrochloride (EDC). In terms of biological role, beta-glucosidase acting as a preformed defense system. Hydrolyzes the bisdesmosides avenacosides A and B to 26-desgluco-avenacosides exhibiting fungicidal activity. Can use beta-fucoside &gt; beta-glucoside &gt; beta-galactoside &gt; beta-xyloside as substrates, but not alpha-glycosides, beta-thioglucosides and disaccharides. The chain is Avenacosidase 1 (P60A) from Avena sativa (Oat).